The sequence spans 413 residues: L-methionine gamma-lyase (413 aa).

Residues Y75–R77 and G105–M106 contribute to the pyridoxal 5'-phosphate site. Position 131 (Y131) interacts with substrate. S218–T220 lines the pyridoxal 5'-phosphate pocket. Position 221 is an N6-(pyridoxal phosphate)lysine (K221). Residue R365 coordinates substrate. The interval R388–R413 is disordered.

Belongs to the trans-sulfuration enzymes family. Homotetramer; dimer of active dimers. Pyridoxal 5'-phosphate serves as cofactor.

It carries out the reaction L-methionine + H2O = methanethiol + 2-oxobutanoate + NH4(+). The enzyme catalyses L-homocysteine + H2O = 2-oxobutanoate + hydrogen sulfide + NH4(+) + H(+). It catalyses the reaction L-cysteine + H2O = hydrogen sulfide + pyruvate + NH4(+) + H(+). Catalyzes the alpha,gamma-elimination of L-methionine to produce methanethiol, 2-oxobutanoate and ammonia. Is probably involved in L-methionine catabolism. Is also able to catalyze the alpha,gamma-elimination of L-homocysteine, and, to a lesser extent, the alpha,beta-elimination of L-cysteine. The protein is L-methionine gamma-lyase of Streptomyces avermitilis (strain ATCC 31267 / DSM 46492 / JCM 5070 / NBRC 14893 / NCIMB 12804 / NRRL 8165 / MA-4680).